We begin with the raw amino-acid sequence, 157 residues long: Protein FAM219A (157 aa).

Methionine 1 is subject to N-acetylmethionine. Residues 1-103 form a disordered region; it reads MMEEIDRFQD…SRYSSSGYSS (103 aa). A compositionally biased stretch (basic and acidic residues) spans 17–33; it reads SDRDCDAREEKQRELAR. The span at 38 to 52 shows a compositional bias: polar residues; it reads KNGSMGSPVNQQPKK. Phosphoserine is present on residues serine 44 and serine 74. Threonine 85 is modified (phosphothreonine). 2 positions are modified to phosphoserine: serine 87 and serine 94. Residues 94-103 show a composition bias toward low complexity; the sequence is SRYSSSGYSS.

Belongs to the FAM219 family.

This Mus musculus (Mouse) protein is Protein FAM219A (Fam219a).